Reading from the N-terminus, the 521-residue chain is MIKQALISVSDKTGIVDFAKALSALGVKLLSTGGTAKLLADAGLPVTEVADYTGFPEMLDGRVKTLHPKVHGGILARRDLPEHMQALEAHGIPTIDLLVVNLYPFVQTIAKDDCTLADAIENIDIGGPTMLRSAAKNHRDVTVVVDPADYAVVLDEMKANGNTLGYKTNFRLATKVFAHTAQYDGAITNYLTSLGDDLQHGSRSAYPATLNLAFDKVQDLRYGENPHQSAAFYRDVATPAGALANYRQLQGKELSYNNIADSDAAWECVKTFDAPACVIIKHANPCGVAVGADAGEAYAKAFQTDPTSAFGGIIAFNREVDEAAAQAVAKQFVEVLIAPSFSDAAKQVFVAKQNVRLLEIALGEGHNAFDLKRVGGGLLVQSLDSKNVQPRELRVVTKRHPTPKEMDDLLFAWRVAKYVKSNAIVFCGNGMTLGVGAGQMSRVDSARIASIKAQNAGLTLAGSAVASDAFFPFRDGLDVVVAAGATCVIQPGGSVRDDEVIAAADEHNIAMVVTGVRHFRH.

An MGS-like domain is found at 1–145; it reads MIKQALISVS…KNHRDVTVVV (145 aa).

This sequence belongs to the PurH family.

The enzyme catalyses (6R)-10-formyltetrahydrofolate + 5-amino-1-(5-phospho-beta-D-ribosyl)imidazole-4-carboxamide = 5-formamido-1-(5-phospho-D-ribosyl)imidazole-4-carboxamide + (6S)-5,6,7,8-tetrahydrofolate. The catalysed reaction is IMP + H2O = 5-formamido-1-(5-phospho-D-ribosyl)imidazole-4-carboxamide. Its pathway is purine metabolism; IMP biosynthesis via de novo pathway; 5-formamido-1-(5-phospho-D-ribosyl)imidazole-4-carboxamide from 5-amino-1-(5-phospho-D-ribosyl)imidazole-4-carboxamide (10-formyl THF route): step 1/1. It functions in the pathway purine metabolism; IMP biosynthesis via de novo pathway; IMP from 5-formamido-1-(5-phospho-D-ribosyl)imidazole-4-carboxamide: step 1/1. The protein is Bifunctional purine biosynthesis protein PurH of Burkholderia pseudomallei (strain 1710b).